The chain runs to 210 residues: dITP/XTP pyrophosphatase (210 aa).

13–18 is a substrate binding site; the sequence is THNPGK. Residues Asp45 and Asp74 each coordinate Mg(2+). Catalysis depends on Asp74, which acts as the Proton acceptor. Substrate is bound by residues Ser75, 160 to 163, Lys183, and 195 to 196; these read FGYD and HR.

Belongs to the HAM1 NTPase family. As to quaternary structure, homodimer. It depends on Mg(2+) as a cofactor.

The catalysed reaction is XTP + H2O = XMP + diphosphate + H(+). It carries out the reaction dITP + H2O = dIMP + diphosphate + H(+). The enzyme catalyses ITP + H2O = IMP + diphosphate + H(+). In terms of biological role, pyrophosphatase that catalyzes the hydrolysis of nucleoside triphosphates to their monophosphate derivatives, with a high preference for the non-canonical purine nucleotides XTP (xanthosine triphosphate), dITP (deoxyinosine triphosphate) and ITP. Seems to function as a house-cleaning enzyme that removes non-canonical purine nucleotides from the nucleotide pool, thus preventing their incorporation into DNA/RNA and avoiding chromosomal lesions. This is dITP/XTP pyrophosphatase from Rhodopseudomonas palustris (strain ATCC BAA-98 / CGA009).